We begin with the raw amino-acid sequence, 168 residues long: CDP-archaeol synthase (168 aa).

Transmembrane regions (helical) follow at residues 4 to 24 (IFEA…PVVL), 51 to 71 (GFFG…LMFP), 81 to 101 (VGVA…GSFI), 112 to 132 (PAVG…AYPL), and 138 to 158 (GEVL…NVFA).

This sequence belongs to the CDP-archaeol synthase family. Requires Mg(2+) as cofactor.

It localises to the cell membrane. It carries out the reaction 2,3-bis-O-(geranylgeranyl)-sn-glycerol 1-phosphate + CTP + H(+) = CDP-2,3-bis-O-(geranylgeranyl)-sn-glycerol + diphosphate. The protein operates within membrane lipid metabolism; glycerophospholipid metabolism. Catalyzes the formation of CDP-2,3-bis-(O-geranylgeranyl)-sn-glycerol (CDP-archaeol) from 2,3-bis-(O-geranylgeranyl)-sn-glycerol 1-phosphate (DGGGP) and CTP. This reaction is the third ether-bond-formation step in the biosynthesis of archaeal membrane lipids. The sequence is that of CDP-archaeol synthase from Pyrococcus abyssi (strain GE5 / Orsay).